A 206-amino-acid chain; its full sequence is Large ribosomal subunit protein uL4 (206 aa).

The segment at 44 to 77 is disordered; that stretch reads RQGTRAQKDRQTVKHSTKKPWRQKGTGRARAGMT. Positions 56–70 are enriched in basic residues; sequence VKHSTKKPWRQKGTG.

The protein belongs to the universal ribosomal protein uL4 family. In terms of assembly, part of the 50S ribosomal subunit.

In terms of biological role, one of the primary rRNA binding proteins, this protein initially binds near the 5'-end of the 23S rRNA. It is important during the early stages of 50S assembly. It makes multiple contacts with different domains of the 23S rRNA in the assembled 50S subunit and ribosome. Its function is as follows. Forms part of the polypeptide exit tunnel. This chain is Large ribosomal subunit protein uL4, found in Methylibium petroleiphilum (strain ATCC BAA-1232 / LMG 22953 / PM1).